A 65-amino-acid chain; its full sequence is MPGVKVKEAEPFELALKKFKKQCEKAGILSEVRKREHYEKPSIKKKKKAIAARKRALKKQRKMVD.

This sequence belongs to the bacterial ribosomal protein bS21 family.

The protein is Small ribosomal subunit protein bS21 of Geobacter sp. (strain M21).